The sequence spans 556 residues: MSVSAFNRRWAAVILEALTRHGVRHICIAPGSRSTPLTLAAAENSAFIHHTHFDERGLGHLALGLAKVSKQPVAVIVTSGTAVANLYPALIEAGLTGEKLILLTADRPPELIDCGANQAIRQPGMFASHPTHSISLPRPTQDIPARWLVSTIDHALGTLHAGGVHINCPFAEPLYGEMDDTGLSWQQRLGDWWQDDKPWLREAPRLESEKQRDWFFWRQKRGVVVAGRMSAEEGKKVALWAQTLGWPLIGDVLSQTGQPLPCADLWLGNAKATSELQQAQIVVQLGSSLTGKRLLQWQASCEPEEYWIVDDIEGRLDPAHHRGRRLIANIADWLELHPAEKRQPWCVEIPRLAEQAMQAVIARRDAFGEAQLAHRICDYLPEQGQLFVGNSLVVRLIDALSQLPAGYPVYSNRGASGIDGLLSTAAGVQRASGKPTLAIVGDLSALYDLNALALLRQVSAPLVLIVVNNNGGQIFSLLPTPQSERERFYLMPQNVHFEHAAAMFELKYHRPQNWQELETAFADAWRTPTTTVIEMVVNDTDGAQTLQQLLAQVSHL.

The protein belongs to the TPP enzyme family. MenD subfamily. Homodimer. The cofactor is Mg(2+). Mn(2+) serves as cofactor. Requires thiamine diphosphate as cofactor.

The catalysed reaction is isochorismate + 2-oxoglutarate + H(+) = 5-enolpyruvoyl-6-hydroxy-2-succinyl-cyclohex-3-ene-1-carboxylate + CO2. Its pathway is quinol/quinone metabolism; 1,4-dihydroxy-2-naphthoate biosynthesis; 1,4-dihydroxy-2-naphthoate from chorismate: step 2/7. It participates in quinol/quinone metabolism; menaquinone biosynthesis. Catalyzes the thiamine diphosphate-dependent decarboxylation of 2-oxoglutarate and the subsequent addition of the resulting succinic semialdehyde-thiamine pyrophosphate anion to isochorismate to yield 2-succinyl-5-enolpyruvyl-6-hydroxy-3-cyclohexene-1-carboxylate (SEPHCHC). This is 2-succinyl-5-enolpyruvyl-6-hydroxy-3-cyclohexene-1-carboxylate synthase from Escherichia coli (strain K12 / MC4100 / BW2952).